The sequence spans 222 residues: Germin-like protein subfamily 1 member 5 (222 aa).

The N-terminal stretch at 1–24 (MKGLLHFLLAKIILLALASSFVYC) is a signal peptide. A disulfide bridge links cysteine 34 with cysteine 50. N-linked (GlcNAc...) asparagine glycosylation is found at asparagine 38 and asparagine 71. The region spanning 64-215 (SGLNVPGNTS…AFALDFNKVK (152 aa)) is the Cupin type-1 domain. Mn(2+) contacts are provided by histidine 112, histidine 114, and glutamate 119. An N-linked (GlcNAc...) asparagine glycan is attached at asparagine 139. Position 163 (histidine 163) interacts with Mn(2+).

The protein belongs to the germin family. In terms of assembly, oligomer (believed to be a pentamer but probably hexamer).

It is found in the secreted. It localises to the extracellular space. The protein resides in the apoplast. In terms of biological role, may play a role in plant defense. Probably has no oxalate oxidase activity even if the active site is conserved. The sequence is that of Germin-like protein subfamily 1 member 5 from Arabidopsis thaliana (Mouse-ear cress).